The sequence spans 292 residues: Norajmaline N-methyltransferase (292 aa).

The interval 71–80 is SAM motif I; that stretch reads KNMLDIGCGV. The segment at 134-142 is SAM motif II; that stretch reads KDGTFDLVL. A Vacuolar targeting signal motif is present at residues 135 to 141; it reads DGTFDLV. The tract at residues 161–170 is SAM motif III; sequence IRVAAPGAPI.

It belongs to the class I-like SAM-binding methyltransferase superfamily. gTMT family. As to quaternary structure, homodimer. In terms of tissue distribution, mainly expressed in mature roots and, to a lesser extent, in leaves, stems and flowers.

The protein resides in the vacuole membrane. It catalyses the reaction norajmaline + S-adenosyl-L-methionine = ajmaline + S-adenosyl-L-homocysteine + H(+). It carries out the reaction 4-methylnorajmaline + S-adenosyl-L-methionine = 4-methylajmaline + S-adenosyl-L-homocysteine + H(+). It functions in the pathway alkaloid biosynthesis; ajmaline biosynthesis. N-methyltransferase involved in the biosynthesis of ajmaline-type monoterpenoid indole alkaloids (MIAs) natural products, important plant-derived pharmaceuticals used in the therapy of heart disorders. Catalyzes the indole N-methylation of norajmaline to produce ajmaline. Also able, with a lower efficiency, to mediates the conversion of 4-methylnorajmaline to 4-methylajmaline. The polypeptide is Norajmaline N-methyltransferase (Rauvolfia serpentina (Serpentine wood)).